The primary structure comprises 439 residues: C4-dicarboxylate transport protein (439 aa).

The next 9 helical transmembrane spans lie at 9 to 29, 45 to 65, 80 to 100, 150 to 170, 186 to 206, 221 to 241, 291 to 311, 334 to 354, and 357 to 377; these read HLYF…YYLP, MIKM…IAGM, LYFE…INII, GEIL…SAMG, AFFG…FGAM, LGML…VVLG, VVGL…SIYL, ILGV…SGFV, and AATF…ILGI.

The protein belongs to the dicarboxylate/amino acid:cation symporter (DAACS) (TC 2.A.23) family.

It is found in the cell inner membrane. In terms of biological role, responsible for the transport of dicarboxylates such as succinate, fumarate, and malate from the periplasm across the membrane. The chain is C4-dicarboxylate transport protein from Geobacter sp. (strain M21).